Reading from the N-terminus, the 406-residue chain is 5-hydroxytryptamine receptor 4 (406 aa).

Over 1–19 (MDRLDANVSSNEGFGSVEK) the chain is Extracellular. N7 carries an N-linked (GlcNAc...) asparagine glycan. A helical membrane pass occupies residues 20-44 (VVLLTFFAMVILMAILGNLLVMVAV). Topologically, residues 45-54 (CRDRQLRKIK) are cytoplasmic. The helical transmembrane segment at 55–78 (TNYFIVSLAFADLLVSVLVNAFGA) threads the bilayer. Residues 79 to 92 (IELVQDIWFYGEMF) are Extracellular-facing. A helical membrane pass occupies residues 93 to 117 (CLVRTSLDVLLTTASIFHLCCISLD). The cysteines at positions 93 and 184 are disulfide-linked. A serotonin-binding site is contributed by D100. Topologically, residues 118–133 (RYYAICCQPLVYRNKM) are cytoplasmic. A helical membrane pass occupies residues 134-157 (TPLRIALMLGGCWVIPMFISFLPI). Residues 158-188 (MQGWNNIGIVDVIEKRKFNHNSNSTFCVFMV) are Extracellular-facing. The chain crosses the membrane as a helical span at residues 189–212 (NKPYAITCSVVAFYIPFLLMVLAY). The Cytoplasmic segment spans residues 213–257 (YRIYVTAKEHAQQIQMLQRAGATSESRPQTADQHSTHRMRTETKA). The chain crosses the membrane as a helical span at residues 258-283 (AKTLCVIMGCFCFCWAPFFVTNIVDP). Residue N279 participates in serotonin binding. The Extracellular portion of the chain corresponds to 284-290 (FIDYTVP). The helical transmembrane segment at 291-314 (EKVWTAFLWLGYINSGLNPFLYAF) threads the bilayer. At 315-406 (LNKSFRRAFL…DSCSLKRSQS (92 aa)) the chain is on the cytoplasmic side.

Belongs to the G-protein coupled receptor 1 family. Interacts (via C-terminus 330-346 AA) with GRK5; this interaction is promoted by 5-HT (serotonin). In brain, isoform 5-HT4S is restricted to the striatum. In peripheral tissues, differential expression is also observed in the atrium of the heart where only isoform 5-HT4S is detectable. As to expression, in brain, isoform 5-HT4L is expressed throughout the brain, except in the cerebellum.

The protein resides in the cell membrane. It is found in the endosome membrane. G-protein coupled receptor for 5-hydroxytryptamine (serotonin), a biogenic hormone that functions as a neurotransmitter, a hormone and a mitogen. Ligand binding causes a conformation change that triggers signaling via guanine nucleotide-binding proteins (G proteins) and modulates the activity of downstream effectors. HTR4 is coupled to G(s) G alpha proteins and mediates activation of adenylate cyclase activity. The chain is 5-hydroxytryptamine receptor 4 (Htr4) from Rattus norvegicus (Rat).